We begin with the raw amino-acid sequence, 190 residues long: Peptidyl-tRNA hydrolase (190 aa).

Y14 provides a ligand contact to tRNA. Residue H19 is the Proton acceptor of the active site. Residues Y64, N66, and N113 each contribute to the tRNA site.

Belongs to the PTH family. As to quaternary structure, monomer.

It is found in the cytoplasm. The enzyme catalyses an N-acyl-L-alpha-aminoacyl-tRNA + H2O = an N-acyl-L-amino acid + a tRNA + H(+). Hydrolyzes ribosome-free peptidyl-tRNAs (with 1 or more amino acids incorporated), which drop off the ribosome during protein synthesis, or as a result of ribosome stalling. Functionally, catalyzes the release of premature peptidyl moieties from peptidyl-tRNA molecules trapped in stalled 50S ribosomal subunits, and thus maintains levels of free tRNAs and 50S ribosomes. The sequence is that of Peptidyl-tRNA hydrolase from Gemmatimonas aurantiaca (strain DSM 14586 / JCM 11422 / NBRC 100505 / T-27).